Here is a 698-residue protein sequence, read N- to C-terminus: DNA ligase (698 aa).

Residues 40 to 44 (DGEYD), 89 to 90 (SL), and Glu123 each bind NAD(+). Catalysis depends on Lys125, which acts as the N6-AMP-lysine intermediate. Positions 146, 184, 300, and 324 each coordinate NAD(+). Zn(2+)-binding residues include Cys418, Cys421, Cys436, and Cys442. One can recognise a BRCT domain in the interval 620–698 (AGDSPLAGKT…EAEFRAMSGG (79 aa)).

This sequence belongs to the NAD-dependent DNA ligase family. LigA subfamily. It depends on Mg(2+) as a cofactor. Requires Mn(2+) as cofactor.

It carries out the reaction NAD(+) + (deoxyribonucleotide)n-3'-hydroxyl + 5'-phospho-(deoxyribonucleotide)m = (deoxyribonucleotide)n+m + AMP + beta-nicotinamide D-nucleotide.. Its function is as follows. DNA ligase that catalyzes the formation of phosphodiester linkages between 5'-phosphoryl and 3'-hydroxyl groups in double-stranded DNA using NAD as a coenzyme and as the energy source for the reaction. It is essential for DNA replication and repair of damaged DNA. This chain is DNA ligase, found in Rhodospirillum rubrum (strain ATCC 11170 / ATH 1.1.1 / DSM 467 / LMG 4362 / NCIMB 8255 / S1).